The sequence spans 151 residues: Sigma factor binding protein 1, chloroplastic (151 aa).

Residues 1–13 (MESSSSTFLTTTS) are compositionally biased toward low complexity. Disordered stretches follow at residues 1–41 (MESS…KPIK) and 66–93 (TGQD…PPAE). The transit peptide at 1–54 (MESSSSTFLTTTSLDKKKPSPVSRKSPKQKKKTTSTNKPIKVRYISNPMRVQTC) directs the protein to the chloroplast. A Bipartite nuclear localization signal motif is present at residues 16 to 32 (KKKPSPVSRKSPKQKKK). The VQ motif lies at 58-67 (FRELVQELTG).

Interacts with the sigma factor SIGA in chloroplast. Interacts with WRKY25 and WRKY33 in the nucleus. As to expression, expressed in leaves and roots, but not in flowers.

The protein localises to the plastid. Its subcellular location is the chloroplast. The protein resides in the nucleus. Functionally, contributes to plant defense. May regulate chloroplast metabolism upon infection with pathogens such as Pseudomonas syringae. Functions as activator of WRKY33 in plant defense against necrotrophic pathogens by stimulating the DNA-binding activity of WRKY33. This is Sigma factor binding protein 1, chloroplastic (SIB1) from Arabidopsis thaliana (Mouse-ear cress).